A 590-amino-acid polypeptide reads, in one-letter code: (+)-sabinene synthase, chloroplastic (590 aa).

Residues 1–51 (MSSISINIAMPLNSLHNFERKPSKAWSTSCTAPAARLRASSSLQQEKPHQI) constitute a chloroplast transit peptide. Positions 343, 347, 487, 491, and 495 each coordinate Mg(2+). A DDXXD motif motif is present at residues 343–347 (DDVYD).

It belongs to the terpene synthase family. In terms of assembly, monomer. Mg(2+) serves as cofactor.

The protein localises to the plastid. Its subcellular location is the chloroplast. The catalysed reaction is (2E)-geranyl diphosphate = (1R,5R)-sabinene + diphosphate. It participates in terpene metabolism; sabinene hydrate biosynthesis. Functionally, catalyzes the formation of the (-)-3-isothujone precursor sabinene from geranyl diphosphate. The enzyme also produces significant amounts of gamma-terpinene, terpinolene and limonene. The polypeptide is (+)-sabinene synthase, chloroplastic (Salvia officinalis (Sage)).